The sequence spans 332 residues: DNA repair and recombination protein RadA (332 aa).

Position 126–133 (Gly126–Thr133) interacts with ATP.

The protein belongs to the eukaryotic RecA-like protein family.

In terms of biological role, involved in DNA repair and in homologous recombination. Binds and assemble on single-stranded DNA to form a nucleoprotein filament. Hydrolyzes ATP in a ssDNA-dependent manner and promotes DNA strand exchange between homologous DNA molecules. The protein is DNA repair and recombination protein RadA of Pyrobaculum calidifontis (strain DSM 21063 / JCM 11548 / VA1).